A 179-amino-acid chain; its full sequence is Large ribosomal subunit protein uL5 (179 aa).

Belongs to the universal ribosomal protein uL5 family. Part of the 50S ribosomal subunit; part of the 5S rRNA/L5/L18/L25 subcomplex. Contacts the 5S rRNA and the P site tRNA. Forms a bridge to the 30S subunit in the 70S ribosome.

Functionally, this is one of the proteins that bind and probably mediate the attachment of the 5S RNA into the large ribosomal subunit, where it forms part of the central protuberance. In the 70S ribosome it contacts protein S13 of the 30S subunit (bridge B1b), connecting the 2 subunits; this bridge is implicated in subunit movement. Contacts the P site tRNA; the 5S rRNA and some of its associated proteins might help stabilize positioning of ribosome-bound tRNAs. This chain is Large ribosomal subunit protein uL5, found in Xylella fastidiosa (strain M12).